Consider the following 145-residue polypeptide: Copper transporter 4 (145 aa).

The next 2 membrane-spanning stretches (helical) occupy residues 53–73 (GMYALALIFVFFLAFLAEWLA) and 106–126 (YLVILAVVSFNGGVFLAAIFG).

It belongs to the copper transporter (Ctr) (TC 1.A.56) family. SLC31A subfamily. In terms of tissue distribution, highly expressed in roots and at lower levels in leaves, stems and flowers.

It localises to the membrane. Involved in the transport of copper. The protein is Copper transporter 4 (COPT4) of Arabidopsis thaliana (Mouse-ear cress).